Consider the following 140-residue polypeptide: ATP synthase epsilon chain (140 aa).

This sequence belongs to the ATPase epsilon chain family. As to quaternary structure, F-type ATPases have 2 components, CF(1) - the catalytic core - and CF(0) - the membrane proton channel. CF(1) has five subunits: alpha(3), beta(3), gamma(1), delta(1), epsilon(1). CF(0) has three main subunits: a, b and c.

The protein localises to the cell inner membrane. Produces ATP from ADP in the presence of a proton gradient across the membrane. In Nitrosomonas europaea (strain ATCC 19718 / CIP 103999 / KCTC 2705 / NBRC 14298), this protein is ATP synthase epsilon chain.